The primary structure comprises 326 residues: Vitamin B12 import system permease protein BtuC (326 aa).

9 consecutive transmembrane segments (helical) span residues 17 to 39, 59 to 81, 88 to 107, 111 to 133, 146 to 168, 188 to 205, 242 to 264, 274 to 296, and 303 to 322; these read LSLS…QWIA, RTLA…QALF, PGLL…AVLL, QLPG…LILL, LLAG…YFST, WQQS…IWIC, MVGV…PHIL, VLLP…VARL, and LPIG…WLLL.

The protein belongs to the binding-protein-dependent transport system permease family. FecCD subfamily. The complex is composed of two ATP-binding proteins (BtuD), two transmembrane proteins (BtuC) and a solute-binding protein (BtuF).

The protein resides in the cell inner membrane. Part of the ABC transporter complex BtuCDF involved in vitamin B12 import. Involved in the translocation of the substrate across the membrane. In Salmonella typhi, this protein is Vitamin B12 import system permease protein BtuC.